Here is a 175-residue protein sequence, read N- to C-terminus: Ferritin light chain (175 aa).

At Ser-2 the chain carries N-acetylserine. The Ferritin-like diiron domain maps to 7–156 (QNYSTDVEAA…DHLTNLHRLG (150 aa)). Fe cation-binding residues include Glu-54, Glu-57, Glu-58, Glu-61, and Glu-64. A catalytic site for iron oxidation region spans residues 54–61 (ELAEEKRE).

The protein belongs to the ferritin family. In terms of assembly, oligomer of 24 subunits. There are two types of subunits: L (light) chain and H (heavy) chain. The major chain can be light or heavy, depending on the species and tissue type. The functional molecule forms a roughly spherical shell with a diameter of 12 nm and contains a central cavity into which the insoluble mineral iron core is deposited. Interacts with NCOA4.

The protein localises to the cytoplasmic vesicle. Its subcellular location is the autophagosome. It is found in the cytoplasm. The protein resides in the autolysosome. In terms of biological role, stores iron in a soluble, non-toxic, readily available form. Important for iron homeostasis. Iron is taken up in the ferrous form and deposited as ferric hydroxides after oxidation. Also plays a role in delivery of iron to cells. Mediates iron uptake in capsule cells of the developing kidney. Delivery to lysosomes by the cargo receptor NCOA4 for autophagic degradation and release or iron. This is Ferritin light chain (FTL) from Pongo abelii (Sumatran orangutan).